The sequence spans 427 residues: 3-phosphoshikimate 1-carboxyvinyltransferase (427 aa).

Positions 22, 23, and 27 each coordinate 3-phosphoshikimate. Lysine 22 serves as a coordination point for phosphoenolpyruvate. Phosphoenolpyruvate-binding residues include glycine 96 and arginine 124. Serine 170, serine 171, glutamine 172, serine 199, aspartate 313, asparagine 336, and lysine 340 together coordinate 3-phosphoshikimate. Glutamine 172 lines the phosphoenolpyruvate pocket. Aspartate 313 acts as the Proton acceptor in catalysis. The phosphoenolpyruvate site is built by arginine 344, arginine 386, and lysine 411.

The protein belongs to the EPSP synthase family. In terms of assembly, monomer.

Its subcellular location is the cytoplasm. The enzyme catalyses 3-phosphoshikimate + phosphoenolpyruvate = 5-O-(1-carboxyvinyl)-3-phosphoshikimate + phosphate. It participates in metabolic intermediate biosynthesis; chorismate biosynthesis; chorismate from D-erythrose 4-phosphate and phosphoenolpyruvate: step 6/7. Catalyzes the transfer of the enolpyruvyl moiety of phosphoenolpyruvate (PEP) to the 5-hydroxyl of shikimate-3-phosphate (S3P) to produce enolpyruvyl shikimate-3-phosphate and inorganic phosphate. The chain is 3-phosphoshikimate 1-carboxyvinyltransferase from Aeromonas salmonicida.